A 24-amino-acid chain; its full sequence is Coenzyme PQQ synthesis protein A (24 aa).

The pyrroloquinoline quinone (Glu-Tyr) cross-link spans 16–20 (EVTMY).

It belongs to the PqqA family.

It functions in the pathway cofactor biosynthesis; pyrroloquinoline quinone biosynthesis. Required for coenzyme pyrroloquinoline quinone (PQQ) biosynthesis. PQQ is probably formed by cross-linking a specific glutamate to a specific tyrosine residue and excising these residues from the peptide. This chain is Coenzyme PQQ synthesis protein A, found in Pseudomonas fluorescens (strain Pf0-1).